The sequence spans 246 residues: UPF0736 protein Aflv_2136 (246 aa).

The protein belongs to the UPF0736 family.

The sequence is that of UPF0736 protein Aflv_2136 from Anoxybacillus flavithermus (strain DSM 21510 / WK1).